The sequence spans 123 residues: Large ribosomal subunit protein uL18 (123 aa).

Belongs to the universal ribosomal protein uL18 family. Part of the 50S ribosomal subunit; part of the 5S rRNA/L5/L18/L25 subcomplex. Contacts the 5S and 23S rRNAs.

In terms of biological role, this is one of the proteins that bind and probably mediate the attachment of the 5S RNA into the large ribosomal subunit, where it forms part of the central protuberance. This chain is Large ribosomal subunit protein uL18, found in Wolbachia pipientis wMel.